A 118-amino-acid chain; its full sequence is Large ribosomal subunit protein bL19 (118 aa).

It belongs to the bacterial ribosomal protein bL19 family.

Its function is as follows. This protein is located at the 30S-50S ribosomal subunit interface and may play a role in the structure and function of the aminoacyl-tRNA binding site. This is Large ribosomal subunit protein bL19 from Campylobacter concisus (strain 13826).